Reading from the N-terminus, the 243-residue chain is Pyridoxine 5'-phosphate synthase (243 aa).

Asn9 contacts 3-amino-2-oxopropyl phosphate. 11-12 (DH) contacts 1-deoxy-D-xylulose 5-phosphate. Arg20 is a binding site for 3-amino-2-oxopropyl phosphate. Catalysis depends on His45, which acts as the Proton acceptor. 1-deoxy-D-xylulose 5-phosphate-binding residues include Arg47 and His52. Residue Glu72 is the Proton acceptor of the active site. 1-deoxy-D-xylulose 5-phosphate is bound at residue Thr102. His193 serves as the catalytic Proton donor. 3-amino-2-oxopropyl phosphate contacts are provided by residues Gly194 and 215 to 216 (GH).

This sequence belongs to the PNP synthase family. Homooctamer; tetramer of dimers.

The protein resides in the cytoplasm. It catalyses the reaction 3-amino-2-oxopropyl phosphate + 1-deoxy-D-xylulose 5-phosphate = pyridoxine 5'-phosphate + phosphate + 2 H2O + H(+). It functions in the pathway cofactor biosynthesis; pyridoxine 5'-phosphate biosynthesis; pyridoxine 5'-phosphate from D-erythrose 4-phosphate: step 5/5. Catalyzes the complicated ring closure reaction between the two acyclic compounds 1-deoxy-D-xylulose-5-phosphate (DXP) and 3-amino-2-oxopropyl phosphate (1-amino-acetone-3-phosphate or AAP) to form pyridoxine 5'-phosphate (PNP) and inorganic phosphate. The polypeptide is Pyridoxine 5'-phosphate synthase (Pectobacterium atrosepticum (strain SCRI 1043 / ATCC BAA-672) (Erwinia carotovora subsp. atroseptica)).